Reading from the N-terminus, the 315-residue chain is Acetaldehyde dehydrogenase 2 (315 aa).

An NAD(+)-binding site is contributed by 11-14 (SGNI). The active-site Acyl-thioester intermediate is the C129. NAD(+) is bound by residues 160–168 (SAGPGTRSN) and N290.

The protein belongs to the acetaldehyde dehydrogenase family.

The enzyme catalyses acetaldehyde + NAD(+) + CoA = acetyl-CoA + NADH + H(+). In Mycobacterium sp. (strain KMS), this protein is Acetaldehyde dehydrogenase 2.